The chain runs to 761 residues: Xaa-Pro dipeptidyl-peptidase (761 aa).

Catalysis depends on charge relay system residues serine 349, aspartate 469, and histidine 499.

This sequence belongs to the peptidase S15 family. In terms of assembly, homodimer.

The protein resides in the cytoplasm. The enzyme catalyses Hydrolyzes Xaa-Pro-|- bonds to release unblocked, N-terminal dipeptides from substrates including Ala-Pro-|-p-nitroanilide and (sequentially) Tyr-Pro-|-Phe-Pro-|-Gly-Pro-|-Ile.. Its function is as follows. Removes N-terminal dipeptides sequentially from polypeptides having unsubstituted N-termini provided that the penultimate residue is proline. The polypeptide is Xaa-Pro dipeptidyl-peptidase (Streptococcus equi subsp. equi (strain 4047)).